The primary structure comprises 1242 residues: Structural polyprotein (1242 aa).

The tract at residues Trp14–Arg101 is disordered. The segment covering Arg26–Gln42 has biased composition (low complexity). The interval Gln35–Gln66 is host transcription inhibition. The Nuclear localization signal motif lies at Pro59 to Pro96. Over residues Arg61 to Lys73 the composition is skewed to basic residues. A compositionally biased stretch (basic and acidic residues) spans Pro74–Pro86. A binding to the viral RNA region spans residues Gln82–Ile111. The span at Lys87 to Arg98 shows a compositional bias: basic residues. The ribosome-binding stretch occupies residues Pro96–Cys110. A disulfide bond links Cys110 and Cys125. Residues Cys110–Trp258 form the Peptidase S3 domain. His136 functions as the Charge relay system in the catalytic mechanism. The Nuclear export signal signature appears at Ile141–Tyr151. Residues Lys152–Tyr157 are interaction with spike glycoprotein E2. The active-site Charge relay system is the Asp158. Positions Pro180 to Ala190 are dimerization of the capsid protein. Ser210 functions as the Charge relay system in the catalytic mechanism. The tract at residues Asp216–Pro220 is dimerization of the capsid protein. A functions as an uncleaved signal peptide for the precursor of protein E3/E2 region spans residues Ala259–Ile272. 8 disulfide bridges follow: Cys267/Cys276, Cys281/Cys285, Cys284/Cys316, Cys343/Cys449, Cys346/Cys352, Cys415/Cys429, Cys477/Cys589, and Cys527/Cys544. N-linked (GlcNAc...) asparagine; by host glycosylation occurs at Asn271. Topologically, residues Ser325–Thr690 are extracellular. Interaction with host Mxra8 receptor stretches follow at residues His350–His353 and His386–His388. Interaction with host Mxra8 receptor regions lie at residues Gln508–Asn511 and Thr540–Val546. N-linked (GlcNAc...) asparagine; by host glycosylation occurs at Asn586. Residues Ile691–Met711 traverse the membrane as a helical segment. Topologically, residues Cys712–Ala746 are cytoplasmic. The interval Val714 to Lys718 is interaction with the capsid protein. Residues Cys719, Cys739, and Cys740 are each lipidated (S-palmitoyl cysteine; by host). The interval Cys719–Cys739 is transient transmembrane before p62-6K protein processing. Cys719 and Cys740 are disulfide-bonded. At Ala747–Gln761 the chain is on the extracellular side. An N-linked (GlcNAc...) asparagine; by host glycan is attached at Asn760. The chain crosses the membrane as a helical span at residues Ser762 to Ala782. The Cytoplasmic portion of the chain corresponds to Arg783–Leu785. Residues Leu786–Ala806 form a helical membrane-spanning segment. Topologically, residues Tyr807–Leu1217 are extracellular. Disulfide bonds link Cys855–Cys920, Cys868–Cys900, Cys869–Cys902, and Cys874–Cys884. An E1 fusion peptide loop region spans residues Val890–Thr907. Asn947 and Asn1076 each carry an N-linked (GlcNAc...) asparagine; by host glycan. 4 disulfides stabilise this stretch: Cys1065–Cys1077, Cys1107–Cys1180, Cys1112–Cys1184, and Cys1134–Cys1174. The chain crosses the membrane as a helical span at residues Ala1218–Val1238. Residue Cys1237 is the site of S-palmitoyl cysteine; by host attachment. The Cytoplasmic segment spans residues Thr1239–Arg1242.

In terms of assembly, homodimer. Homomultimer. Interacts with host karyopherin KPNA4; this interaction allows the nuclear import of the viral capsid protein. Interacts with spike glycoprotein E2. Interacts with host IRAK1; the interaction leads to inhibition of IRAK1-dependent signaling. The precursor of protein E3/E2 and E1 form a heterodimer shortly after synthesis. As to quaternary structure, the precursor of protein E3/E2 and E1 form a heterodimer shortly after synthesis. Processing of the precursor of protein E3/E2 into E2 and E3 results in a heterodimer of the spike glycoproteins E2 and E1. Spike at virion surface are constituted of a trimer of E2-E1 heterodimers. After target cell attachment and endocytosis, E1 change conformation to form homotrimers. Interacts with 6K protein. In terms of assembly, interacts with spike glycoprotein E1. Processing of the precursor of protein E3/E2 into E2 and E3 results in a heterodimer of the spike glycoproteins E2 and E1. Spike at virion surface are constituted of a trimer of E2-E1 heterodimers. Interacts with 6K protein. Interacts with host MXRA8; this interaction mediates virus entry. Oligomer. Interacts with spike glycoprotein E1. Interacts with spike glycoprotein E2. Post-translationally, structural polyprotein: Specific enzymatic cleavages in vivo yield mature proteins. Capsid protein is auto-cleaved during polyprotein translation, unmasking a signal peptide at the N-terminus of the precursor of E3/E2. The remaining polyprotein is then targeted to the host endoplasmic reticulum, where host signal peptidase cleaves it into pE2, 6K and E1 proteins. pE2 is further processed to mature E3 and E2 by host furin in trans-Golgi vesicle. Palmitoylated via thioester bonds. These palmitoylations may induce disruption of the C-terminus transmembrane. This would result in the reorientation of E2 C-terminus from lumenal to cytoplasmic side. In terms of processing, N-glycosylated. Post-translationally, palmitoylated via thioester bonds.

Its subcellular location is the virion. The protein resides in the host cytoplasm. It localises to the host cell membrane. It is found in the host nucleus. The protein localises to the virion membrane. Its subcellular location is the host Golgi apparatus. The protein resides in the host trans-Golgi network. It localises to the host endoplasmic reticulum. The catalysed reaction is Autocatalytic release of the core protein from the N-terminus of the togavirus structural polyprotein by hydrolysis of a -Trp-|-Ser- bond.. In terms of biological role, forms an icosahedral capsid with a T=4 symmetry composed of 240 copies of the capsid protein surrounded by a lipid membrane through which penetrate 80 spikes composed of trimers of E1-E2 heterodimers. The capsid protein binds to the viral RNA genome at a site adjacent to a ribosome binding site for viral genome translation following genome release. Possesses a protease activity that results in its autocatalytic cleavage from the nascent structural protein. Following its self-cleavage, the capsid protein transiently associates with ribosomes, and within several minutes the protein binds to viral RNA and rapidly assembles into icosahedric core particles. The resulting nucleocapsid eventually associates with the cytoplasmic domain of the spike glycoprotein E2 at the cell membrane, leading to budding and formation of mature virions. In case of infection, new virions attach to target cells and after clathrin-mediated endocytosis their membrane fuses with the host endosomal membrane. This leads to the release of the nucleocapsid into the cytoplasm, followed by an uncoating event necessary for the genomic RNA to become accessible. The uncoating might be triggered by the interaction of capsid proteins with ribosomes. Binding of ribosomes would release the genomic RNA since the same region is genomic RNA-binding and ribosome-binding. Specifically inhibits interleukin-1 receptor-associated kinase 1/IRAK1-dependent signaling during viral entry, representing a means by which the alphaviruses may evade innate immune detection and activation prior to viral gene expression. Its function is as follows. Provides the signal sequence for the translocation of the precursor of protein E3/E2 to the host endoplasmic reticulum. Furin-cleaved E3 remains associated with spike glycoprotein E1 and mediates pH protection of the latter during the transport via the secretory pathway. After virion release from the host cell, the assembly protein E3 is gradually released in the extracellular space. Plays a role in viral attachment to target host cell, by binding to the cell receptor MXRA8. Synthesized as a p62 precursor which is processed by furin at the cell membrane just before virion budding, giving rise to E2-E1 heterodimer. The p62-E1 heterodimer is stable, whereas E2-E1 is unstable and dissociate at low pH. p62 is processed at the last step, presumably to avoid E1 fusion activation before its final export to cell surface. E2 C-terminus contains a transitory transmembrane that would be disrupted by palmitoylation, resulting in reorientation of the C-terminal tail from lumenal to cytoplasmic side. This step is critical since E2 C-terminus is involved in budding by interacting with capsid proteins. This release of E2 C-terminus in cytoplasm occurs lately in protein export, and precludes premature assembly of particles at the endoplasmic reticulum membrane. Functionally, acts as a viroporin that participates in virus glycoprotein processing and transport to the plasma membrane, cell permeabilization and budding of viral particles. Disrupts the calcium homeostasis of the cell, probably at the endoplasmic reticulum level. This leads to cytoplasmic calcium elevation. Because of its lipophilic properties, the 6K protein is postulated to influence the selection of lipids that interact with the transmembrane domains of the glycoproteins, which, in turn, affects the deformability of the bilayer required for the extreme curvature that occurs as budding proceeds. Present in low amount in virions, about 3% compared to viral glycoproteins. In terms of biological role, class II viral fusion protein. Fusion activity is inactive as long as E1 is bound to E2 in mature virion. After virus attachment to target cell via host MXRA8 and endocytosis, acidification of the endosome induce dissociation of E1/E2 heterodimer and concomitant trimerization of the E1 subunits. This E1 trimer is fusion active, and promotes release of viral nucleocapsid in cytoplasm after endosome and viral membrane fusion. Efficient fusion requires the presence of cholesterol and sphingolipid in the target membrane. The chain is Structural polyprotein from Mayaro virus (strain Brazil) (MAYV).